We begin with the raw amino-acid sequence, 242 residues long: HTH-type transcriptional regulator GadW (242 aa).

The HTH araC/xylS-type domain occupies 139–236; it reads GKVERLISFD…GVTPHQFAQH (98 aa). DNA-binding regions (H-T-H motif) lie at residues 156-177 and 203-226; these read RDIA…QDEN and LHTI…RQYY.

As to quaternary structure, homodimer.

Depending on the conditions (growth phase and medium), acts as a positive or negative regulator of gadA and gadBC. Repression occurs directly or via the repression of the expression of gadX. Activation occurs directly by the binding of GadW to the gadA and gadBC promoters. The chain is HTH-type transcriptional regulator GadW (gadW) from Escherichia coli (strain K12).